The following is a 1381-amino-acid chain: DNA-directed RNA polymerase subunit beta'' (1381 aa).

The Zn(2+) site is built by Cys-224, Cys-295, Cys-302, and Cys-305.

Belongs to the RNA polymerase beta' chain family. RpoC2 subfamily. In plastids the minimal PEP RNA polymerase catalytic core is composed of four subunits: alpha, beta, beta', and beta''. When a (nuclear-encoded) sigma factor is associated with the core the holoenzyme is formed, which can initiate transcription. The cofactor is Zn(2+).

The protein localises to the plastid. It is found in the chloroplast. The catalysed reaction is RNA(n) + a ribonucleoside 5'-triphosphate = RNA(n+1) + diphosphate. In terms of biological role, DNA-dependent RNA polymerase catalyzes the transcription of DNA into RNA using the four ribonucleoside triphosphates as substrates. The polypeptide is DNA-directed RNA polymerase subunit beta'' (Guizotia abyssinica (Niger)).